Consider the following 102-residue polypeptide: uncharacterized protein (102 aa).

This is an uncharacterized protein from Acidianus filamentous virus 1 (isolate United States/Yellowstone) (AFV-1).